The following is an 862-amino-acid chain: DNA mismatch repair protein MutS (862 aa).

An ATP-binding site is contributed by 613-620 (GPNMAGKS).

It belongs to the DNA mismatch repair MutS family.

Functionally, this protein is involved in the repair of mismatches in DNA. It is possible that it carries out the mismatch recognition step. This protein has a weak ATPase activity. The sequence is that of DNA mismatch repair protein MutS from Desulfitobacterium hafniense (strain Y51).